The sequence spans 346 residues: Zinc-type alcohol dehydrogenase-like protein C1773.06c (346 aa).

Belongs to the zinc-containing alcohol dehydrogenase family. Quinone oxidoreductase subfamily.

It is found in the cytoplasm. In Schizosaccharomyces pombe (strain 972 / ATCC 24843) (Fission yeast), this protein is Zinc-type alcohol dehydrogenase-like protein C1773.06c.